Consider the following 109-residue polypeptide: uncharacterized protein (109 aa).

This sequence to M.jannaschii MJ1244 and MJ1245 and M.thermoautotrophicum MTH1110.

This is an uncharacterized protein from Methanococcus maripaludis (Methanococcus deltae).